The sequence spans 591 residues: Aspartate--tRNA(Asp/Asn) ligase (591 aa).

E175 is an L-aspartate binding site. The aspartate stretch occupies residues Q199–K202. R221 and H453 together coordinate L-aspartate. R221–E223 is an ATP binding site. E486 contacts ATP. L-aspartate is bound at residue R493. G538 to R541 provides a ligand contact to ATP.

The protein belongs to the class-II aminoacyl-tRNA synthetase family. Type 1 subfamily. As to quaternary structure, homodimer.

It localises to the cytoplasm. The catalysed reaction is tRNA(Asx) + L-aspartate + ATP = L-aspartyl-tRNA(Asx) + AMP + diphosphate. Functionally, aspartyl-tRNA synthetase with relaxed tRNA specificity since it is able to aspartylate not only its cognate tRNA(Asp) but also tRNA(Asn). Reaction proceeds in two steps: L-aspartate is first activated by ATP to form Asp-AMP and then transferred to the acceptor end of tRNA(Asp/Asn). This chain is Aspartate--tRNA(Asp/Asn) ligase, found in Paracoccus denitrificans (strain Pd 1222).